Reading from the N-terminus, the 261-residue chain is MRIALGIEYDGSGYFGWQRQAEVDSVQGQLEQALSKVANEPISLFCAGRTDAGVHATGQVVHFETNAIRNEGAWTLGVNANLPDNIAVRWAKEVDDTFHARFSATARRYRYVIYNHNFRPGILRHGVSHYHGDIDTDKMHVAAQALLGEQDFTSFRAIQCQSKTPFRNVHSVKVTRQGMYVIVDISANAFLHHMVRNIVGSLLEIGLGNQPLTWMADLLALKDRNQAAATAKPNGLYLVDVTYPEQYQLPKLALGPLFMLD.

Asp-51 (nucleophile) is an active-site residue. Tyr-109 provides a ligand contact to substrate.

This sequence belongs to the tRNA pseudouridine synthase TruA family. As to quaternary structure, homodimer.

The enzyme catalyses uridine(38/39/40) in tRNA = pseudouridine(38/39/40) in tRNA. Formation of pseudouridine at positions 38, 39 and 40 in the anticodon stem and loop of transfer RNAs. This is tRNA pseudouridine synthase A from Shewanella sp. (strain ANA-3).